Here is a 217-residue protein sequence, read N- to C-terminus: Large ribosomal subunit protein uL3 (217 aa).

Gln-152 is modified (N5-methylglutamine).

It belongs to the universal ribosomal protein uL3 family. Part of the 50S ribosomal subunit. Forms a cluster with proteins L14 and L19. Methylated by PrmB.

In terms of biological role, one of the primary rRNA binding proteins, it binds directly near the 3'-end of the 23S rRNA, where it nucleates assembly of the 50S subunit. The polypeptide is Large ribosomal subunit protein uL3 (Blochmanniella pennsylvanica (strain BPEN)).